The chain runs to 747 residues: Kinesin-like protein KIF3B (747 aa).

M1 carries the N-acetylmethionine modification. An N-acetylserine; in Kinesin-like protein KIF3B, N-terminally processed modification is found at S2. Positions 9–340 (SVRVVVRCRP…LRYANRAKNI (332 aa)) constitute a Kinesin motor domain. 96–103 (GQTGTGKT) is an ATP binding site. Residues 346–579 (VNEDPKDALL…EQTQNELTRE (234 aa)) are a coiled coil. Disordered regions lie at residues 374–412 (IGRR…DKDD) and 699–747 (QVDA…LVPK). The segment covering 393–411 (GEEEEEEGEEGEEEGDDKD) has biased composition (acidic residues). Positions 580-747 (LKLKHLIIEN…YPQSRGLVPK (168 aa)) are globular. Residues 701 to 710 (DASSFESTAN) are compositionally biased toward polar residues. The span at 711-721 (KKSKARPKSGR) shows a compositional bias: basic residues. Residues 722–735 (KSGSSSSSSGTPAS) show a composition bias toward low complexity.

This sequence belongs to the TRAFAC class myosin-kinesin ATPase superfamily. Kinesin family. Kinesin II subfamily. As to quaternary structure, heterodimer of KIF3A and KIF3B. KIF3A/KIF3B heterodimer interacts with KIFAP3 forming a heterotrimeric (KIF3A/KIF3B/KIFAP3) complex. Interacts directly with IFT20. Interacts with the SMC3 subunit of the cohesin complex. Interacts with FLCN.

It localises to the cytoplasm. Its subcellular location is the cytoskeleton. The protein localises to the cell projection. The protein resides in the cilium. It is found in the dendritic spine. Microtubule-based molecular motor that transport intracellular cargos, such as vesicles, organelles and protein complexes. Uses ATP hydrolysis to generate force to bind and move along the microtubule. Plays a role in cilia formation. Involved in photoreceptor integrity and opsin trafficking in rod photoreceptors. Transports vesicles containing N-methyl-D-aspartate (NMDA) receptor subunit GRIN2A into neuronal dendrites. The polypeptide is Kinesin-like protein KIF3B (KIF3B) (Homo sapiens (Human)).